The chain runs to 190 residues: Elongation factor P-like protein (190 aa).

It belongs to the elongation factor P family.

In Klebsiella pneumoniae (strain 342), this protein is Elongation factor P-like protein.